A 170-amino-acid chain; its full sequence is Adenine phosphoribosyltransferase (170 aa).

The protein belongs to the purine/pyrimidine phosphoribosyltransferase family. As to quaternary structure, homodimer.

The protein localises to the cytoplasm. The enzyme catalyses AMP + diphosphate = 5-phospho-alpha-D-ribose 1-diphosphate + adenine. It participates in purine metabolism; AMP biosynthesis via salvage pathway; AMP from adenine: step 1/1. Catalyzes a salvage reaction resulting in the formation of AMP, that is energically less costly than de novo synthesis. The polypeptide is Adenine phosphoribosyltransferase (Prochlorococcus marinus (strain MIT 9312)).